The following is an 843-amino-acid chain: MPLSYQHFRRLLLLDNEAGPLEEELPRLADEDLNHRVAEDLNLQLPNVSIPWTHKVGNFTGLYSSTIPVFNPDWLTPSFPDIHLHQDLIQKCEQFVGPLTTNERRRLKLIMPARFYPKVTKYFPLDKGIKPYYPENVVNHYFKTRHYLHTLWKAGILYKRESTHSASFCGSPYSWEQELQHGSTSLNGEKGHGTEPFCAQSSGILSRPPVGSTIQSKFQQSRLGLQHKQGQLANGKQGRSGRLRSRVHTPTRWPSGVEPSGTGHSDNLATRSTSCFHQSEVRKKANPSLSTSKGHTSTGHAVELNTVPPSTVGSESKGSVFSCWWLQFRNTEPCSDYCLSHIINLLEDWGPCYEHGEHHIRTPKTPSRVTGGVFLVDKNPHNTTESRLVVDFSQFSRGTTRVSWPKFAVPNLQSLTNLLSSNLSWLSLDVSAAFYHLPLHPAAMPHLLVGSSGLSRYVARVSSTSRIYNHQHGTLQNLHHSCSRNLYVSLLLLYQTFGRKLHLYSHPIILGFRKIPMGVGLSPFLLAQFTSAICSVVRRAFPHCLAFSYMDDLVLGAKSVQHLESLYTAVTNFLLSVGIHLNTAKTKWWGYSLHFMGYIIGSWGTLPQEHIVHKIKDCFRKLPVNRPIDWKVCQRIVGLLGFAAPFTQCGYPALMPLYACITAKQAFVFSPTYKAFLCKQYMNLYPVARQRPGLCQVFADATPTGWGLAIGHQRMRGTFVAPLPIHTAELLAACFARSRSGADIIGTDNSVVLSRKYTSFPWLLGCAANWILRGTSFVYVPSALNPADDPSRGRLGLCRPLLRLPFRPTTGRTSLYADSPPVPSHLPARVHFASPLHVAWRPP.

The terminal protein domain (TP) stretch occupies residues 1–177; the sequence is MPLSYQHFRR…FCGSPYSWEQ (177 aa). Residues 178–346 form a spacer region; sequence ELQHGSTSLN…YCLSHIINLL (169 aa). Disordered stretches follow at residues 180–202 and 226–315; these read QHGS…AQSS and QHKQ…VGSE. The span at 239 to 249 shows a compositional bias: basic residues; sequence RSGRLRSRVHT. 2 stretches are compositionally biased toward polar residues: residues 262–277 and 287–299; these read TGHS…SCFH and PSLS…TSTG. The polymerase/reverse transcriptase domain (RT) stretch occupies residues 347–690; the sequence is EDWGPCYEHG…YMNLYPVARQ (344 aa). In terms of domain architecture, Reverse transcriptase spans 357-600; sequence EHHIRTPKTP…YSLHFMGYII (244 aa). Residues Asp429, Asp551, and Asp552 each coordinate Mg(2+).

The protein belongs to the hepadnaviridae P protein family.

It carries out the reaction DNA(n) + a 2'-deoxyribonucleoside 5'-triphosphate = DNA(n+1) + diphosphate. The catalysed reaction is Endonucleolytic cleavage to 5'-phosphomonoester.. Activated by host HSP70 and HSP40 in vitro to be able to bind the epsilon loop of the pgRNA. Because deletion of the RNase H region renders the protein partly chaperone-independent, the chaperones may be needed indirectly to relieve occlusion of the RNA-binding site by this domain. Inhibited by several reverse-transcriptase inhibitors: Lamivudine, Adefovir and Entecavir. Multifunctional enzyme that converts the viral RNA genome into dsDNA in viral cytoplasmic capsids. This enzyme displays a DNA polymerase activity that can copy either DNA or RNA templates, and a ribonuclease H (RNase H) activity that cleaves the RNA strand of RNA-DNA heteroduplexes in a partially processive 3'- to 5'-endonucleasic mode. Neo-synthesized pregenomic RNA (pgRNA) are encapsidated together with the P protein, and reverse-transcribed inside the nucleocapsid. Initiation of reverse-transcription occurs first by binding the epsilon loop on the pgRNA genome, and is initiated by protein priming, thereby the 5'-end of (-)DNA is covalently linked to P protein. Partial (+)DNA is synthesized from the (-)DNA template and generates the relaxed circular DNA (RC-DNA) genome. After budding and infection, the RC-DNA migrates in the nucleus, and is converted into a plasmid-like covalently closed circular DNA (cccDNA). The activity of P protein does not seem to be necessary for cccDNA generation, and is presumably released from (+)DNA by host nuclear DNA repair machinery. This chain is Protein P, found in Hepatitis B virus genotype H (isolate United States/LAS2523/2002) (HBV-H).